The sequence spans 360 residues: Farnesyl pyrophosphate synthase (360 aa).

Positions 52, 55, and 90 each coordinate isopentenyl diphosphate. Mg(2+)-binding residues include aspartate 97 and aspartate 101. Arginine 106 serves as a coordination point for dimethylallyl diphosphate. Arginine 107 is an isopentenyl diphosphate binding site. Lysine 194, threonine 195, glutamine 237, lysine 254, and lysine 263 together coordinate dimethylallyl diphosphate.

Belongs to the FPP/GGPP synthase family. The cofactor is Mg(2+).

The catalysed reaction is isopentenyl diphosphate + dimethylallyl diphosphate = (2E)-geranyl diphosphate + diphosphate. The enzyme catalyses isopentenyl diphosphate + (2E)-geranyl diphosphate = (2E,6E)-farnesyl diphosphate + diphosphate. Its pathway is isoprenoid biosynthesis; farnesyl diphosphate biosynthesis; farnesyl diphosphate from geranyl diphosphate and isopentenyl diphosphate: step 1/1. It participates in isoprenoid biosynthesis; geranyl diphosphate biosynthesis; geranyl diphosphate from dimethylallyl diphosphate and isopentenyl diphosphate: step 1/1. Farnesyl pyrophosphate synthase; part of the second module of ergosterol biosynthesis pathway that includes the middle steps of the pathway. The second module involves the formation of farnesyl diphosphate, which is also an important intermediate in the biosynthesis of ubiquinone, dolichol, heme and prenylated proteins. This module also plays a key role in the biosynthesis of triterpenes such as ganoderic acids (GA), a group of highly oxygenated lanostane-type triterpenoids which are well recognized as a main group of unique bioactive compounds in the medicinal mushroom Ganoderma lucidum. Activity by the mevalonate kinase first converts mevalonate into 5-phosphomevalonate. 5-phosphomevalonate is then further converted to 5-diphosphomevalonate by the phosphomevalonate kinase. The diphosphomevalonate decarboxylase MVD then produces isopentenyl diphosphate. The isopentenyl-diphosphate delta-isomerase then catalyzes the 1,3-allylic rearrangement of the homoallylic substrate isopentenyl (IPP) to its highly electrophilic allylic isomer, dimethylallyl diphosphate (DMAPP). Finally the farnesyl diphosphate synthase FPS catalyzes the sequential condensation of isopentenyl pyrophosphate with dimethylallyl pyrophosphate, and then with the resultant geranylpyrophosphate to the ultimate product farnesyl pyrophosphate. The chain is Farnesyl pyrophosphate synthase from Ganoderma lucidum (Ling zhi medicinal fungus).